Reading from the N-terminus, the 803-residue chain is Leucine--tRNA ligase (803 aa).

The short motif at 40–51 is the 'HIGH' region element; sequence PYPSGAGLHVGH. A 'KMSKS' region motif is present at residues 575 to 579; it reads KMSKS. An ATP-binding site is contributed by lysine 578.

This sequence belongs to the class-I aminoacyl-tRNA synthetase family.

The protein localises to the cytoplasm. It catalyses the reaction tRNA(Leu) + L-leucine + ATP = L-leucyl-tRNA(Leu) + AMP + diphosphate. The protein is Leucine--tRNA ligase of Listeria innocua serovar 6a (strain ATCC BAA-680 / CLIP 11262).